The chain runs to 458 residues: Bifunctional protein GlmU (458 aa).

The pyrophosphorylase stretch occupies residues 1-229 (MTNYAIILAA…FNESLGVNDR (229 aa)). Residues 8 to 11 (LAAG), Lys22, Gln72, and 77 to 78 (GT) contribute to the UDP-N-acetyl-alpha-D-glucosamine site. Asp102 provides a ligand contact to Mg(2+). Positions 139, 154, 169, and 227 each coordinate UDP-N-acetyl-alpha-D-glucosamine. Mg(2+) is bound at residue Asn227. Residues 230–250 (VALATAESVMRRRINKAHMIN) form a linker region. The interval 251-458 (GVTFQNPDAT…AKRLPHYPQK (208 aa)) is N-acetyltransferase. UDP-N-acetyl-alpha-D-glucosamine-binding residues include Arg332 and Lys350. Catalysis depends on His362, which acts as the Proton acceptor. Tyr365 and Asn376 together coordinate UDP-N-acetyl-alpha-D-glucosamine. Residues Ala379, 385–386 (NY), Ser404, Ala422, and Arg439 contribute to the acetyl-CoA site.

In the N-terminal section; belongs to the N-acetylglucosamine-1-phosphate uridyltransferase family. It in the C-terminal section; belongs to the transferase hexapeptide repeat family. As to quaternary structure, homotrimer. Mg(2+) is required as a cofactor.

It is found in the cytoplasm. It carries out the reaction alpha-D-glucosamine 1-phosphate + acetyl-CoA = N-acetyl-alpha-D-glucosamine 1-phosphate + CoA + H(+). The catalysed reaction is N-acetyl-alpha-D-glucosamine 1-phosphate + UTP + H(+) = UDP-N-acetyl-alpha-D-glucosamine + diphosphate. It participates in nucleotide-sugar biosynthesis; UDP-N-acetyl-alpha-D-glucosamine biosynthesis; N-acetyl-alpha-D-glucosamine 1-phosphate from alpha-D-glucosamine 6-phosphate (route II): step 2/2. The protein operates within nucleotide-sugar biosynthesis; UDP-N-acetyl-alpha-D-glucosamine biosynthesis; UDP-N-acetyl-alpha-D-glucosamine from N-acetyl-alpha-D-glucosamine 1-phosphate: step 1/1. It functions in the pathway bacterial outer membrane biogenesis; LPS lipid A biosynthesis. Catalyzes the last two sequential reactions in the de novo biosynthetic pathway for UDP-N-acetylglucosamine (UDP-GlcNAc). The C-terminal domain catalyzes the transfer of acetyl group from acetyl coenzyme A to glucosamine-1-phosphate (GlcN-1-P) to produce N-acetylglucosamine-1-phosphate (GlcNAc-1-P), which is converted into UDP-GlcNAc by the transfer of uridine 5-monophosphate (from uridine 5-triphosphate), a reaction catalyzed by the N-terminal domain. This Streptococcus uberis (strain ATCC BAA-854 / 0140J) protein is Bifunctional protein GlmU.